The sequence spans 297 residues: N-acetylneuraminate lyase (297 aa).

Residues serine 47 and threonine 48 each coordinate aceneuramate. Catalysis depends on tyrosine 137, which acts as the Proton donor. The Schiff-base intermediate with substrate role is filled by lysine 165. Residues threonine 167, glycine 189, aspartate 191, glutamate 192, and serine 208 each coordinate aceneuramate.

It belongs to the DapA family. NanA subfamily. In terms of assembly, homotetramer.

It is found in the cytoplasm. The catalysed reaction is aceneuramate = aldehydo-N-acetyl-D-mannosamine + pyruvate. Its pathway is amino-sugar metabolism; N-acetylneuraminate degradation; D-fructose 6-phosphate from N-acetylneuraminate: step 1/5. In terms of biological role, catalyzes the reversible aldol cleavage of N-acetylneuraminic acid (sialic acid; Neu5Ac) to form pyruvate and N-acetylmannosamine (ManNAc) via a Schiff base intermediate. The polypeptide is N-acetylneuraminate lyase (Enterobacter sp. (strain 638)).